A 231-amino-acid chain; its full sequence is 5'-methylthioadenosine/S-adenosylhomocysteine nucleosidase (231 aa).

The active-site Proton acceptor is the Glu-12. Residues Gly-78, Val-153, and 174 to 175 contribute to the substrate site; that span reads ME. The Proton donor role is filled by Asp-198.

Belongs to the PNP/UDP phosphorylase family. MtnN subfamily.

The enzyme catalyses S-adenosyl-L-homocysteine + H2O = S-(5-deoxy-D-ribos-5-yl)-L-homocysteine + adenine. The catalysed reaction is S-methyl-5'-thioadenosine + H2O = 5-(methylsulfanyl)-D-ribose + adenine. It catalyses the reaction 5'-deoxyadenosine + H2O = 5-deoxy-D-ribose + adenine. It functions in the pathway amino-acid biosynthesis; L-methionine biosynthesis via salvage pathway; S-methyl-5-thio-alpha-D-ribose 1-phosphate from S-methyl-5'-thioadenosine (hydrolase route): step 1/2. In terms of biological role, catalyzes the irreversible cleavage of the glycosidic bond in both 5'-methylthioadenosine (MTA) and S-adenosylhomocysteine (SAH/AdoHcy) to adenine and the corresponding thioribose, 5'-methylthioribose and S-ribosylhomocysteine, respectively. Also cleaves 5'-deoxyadenosine, a toxic by-product of radical S-adenosylmethionine (SAM) enzymes, into 5-deoxyribose and adenine. The chain is 5'-methylthioadenosine/S-adenosylhomocysteine nucleosidase from Vibrio vulnificus (strain YJ016).